The sequence spans 1030 residues: MAAAAALEAVAPLGTLWGLVQDFVMGQQEGPADQVAADVKSGSYTVLQVVEALGSSLENPEPRTRARGIQLLSQVLLQCHSLLLEKEVVHLILFYENRLKDHHLVIPSVLQGLRALSLCVTLPPGLAVSVLKAIFQEVHVQSLPQVDRHTVYSIITNFMRAREEELKGLGADFTFGFIQVMDGEKDPRNLLVAFHIVYDLISRDYSLGPFVEELFEVTSCYFPIDFTPPPNDPHGIQREDLILSLRAVLASTPRFAEFLLPLLIEKVDSEILSAKLDSLQTLNACCAVYGQKELKDFLPSLWASIRREVFQTASERVEAEGLAALNSLTACLSRSVLRADAEDLLDSFLSNILQDCRHHLCEPDMKLVWPSAKLLQAAAGASARACDHVTSNVLPLLLEQFHKHSQSNQRRTILEMILGFLKLQQKWSYEDKDERPLSGFKDQLCSLMFMALTDPNTQLQLVGIRTLTVLGAQPDLLSSGDLELAVGHLYRLSFLEEDSQSCRVAALEASGTLATLYPMAFSSHLVPRLAEDLCTEESDLARADGPTRCSRHPRCLQALSAISTHPSIVKETLPLLLQHLCQMNRGSVSPGTSEVIAVCQSLQQVAENCQRDPESCWYFHQTAVPCLLALVVQASAPEKEHSVLKKVLLEDEVLATMASVIATATTHLSPDLASQSVAHIVPLFLDGNISFLPENSFSGRFQPFQDGSSGQRRLVALLMAFVCSLPRNVEIPQLNRLMGELLELSCCQSCPFSSTAAAKCFAGLLNKHPAGQQLDEFLQLAVDKVEAGLSSGPCRSQAFTLLLWVTKALVLRYHPLSSCLTERLMGLLSDPELGPAAADGFSLLMSDCTDVLTRAGHAEVRIMFRQRFFTDNVPALVRGFHAAPQDVKPNYLKGLSHVLNRLPKPVLLPELPTLLSLLLEALSCPDSVVQLSTLSCLQPLLLEAPQVMSLHVDTLITKFLNLSASPSMAVRIAALQCMHALTRLPTPVLLPYKPQVIRALAKPLDDKKRLVRKEAVSARGEWFLLGSPGS.

Alanine 2 bears the N-acetylalanine mark. HEAT repeat units follow at residues glutamine 866–lysine 904, leucine 908–glutamine 946, serine 949–proline 987, and leucine 990–proline 1028. At serine 1027 the chain carries Phosphoserine.

This sequence belongs to the MET18/MMS19 family. Component of the CIA complex. In the CIA complex, interacts directly with CIAO2B and CIAO3. Component of the MMXD complex, composed of CIAO1, ERCC2, CIAO2B, MMS19 and SLC25A5. Interacts with CIAO2B; the interaction is direct. Interacts with ERCC2/XPD; the interaction is direct. Interacts with ERCC3/XPB and NCOA3/RAC3. Interacts with RTEL1; the interaction mediates the association of RTEL1 with the CIA complex. Interacts with BRIP1. Interacts with KIF4A; the interaction facilitates the transfer of Fe-S clusters to KIF4A to ensure proper localization of KIF4A to the mitotic machinery components. Interacts with CCDC117; the interaction is indirect. Ubiquitinated; undergoes 'Lys-48'-linked polyubiquitination.

The protein resides in the nucleus. Its subcellular location is the cytoplasm. It is found in the cytoskeleton. It localises to the spindle. In terms of biological role, key component of the cytosolic iron-sulfur protein assembly (CIA) complex, a multiprotein complex that mediates the incorporation of iron-sulfur cluster into apoproteins specifically involved in DNA metabolism and genomic integrity. In the CIA complex, MMS19 acts as an adapter between early-acting CIA components and a subset of cellular target Fe/S proteins such as ERCC2/XPD, FANCJ and RTEL1, thereby playing a key role in nucleotide excision repair (NER), homologous recombination-mediated double-strand break DNA repair, DNA replication and RNA polymerase II (POL II) transcription. As a CIA complex component and in collaboration with CIAO1 and CIAO2, binds to and facilitates the assembly of most cytosolic-nuclear Fe/S proteins. As part of the mitotic spindle-associated MMXD complex, plays a role in chromosome segregation, probably by facilitating iron-sulfur cluster assembly into ERCC2/XPD. Together with CIAO2, facilitates the transfer of Fe-S clusters to the motor protein KIF4A, which ensures proper localization of KIF4A to mitotic machinery components to promote the progression of mitosis. Indirectly acts as a transcriptional coactivator of estrogen receptor (ER), via its role in iron-sulfur insertion into some component of the TFIIH-machinery. This is MMS19 nucleotide excision repair protein homolog from Bos taurus (Bovine).